The following is an 864-amino-acid chain: Leucine--tRNA ligase (864 aa).

The short motif at 42–52 (PYPSGKLHMGH) is the 'HIGH' region element. The 'KMSKS' region signature appears at 624–628 (KMSKS). K627 lines the ATP pocket.

Belongs to the class-I aminoacyl-tRNA synthetase family.

The protein resides in the cytoplasm. The enzyme catalyses tRNA(Leu) + L-leucine + ATP = L-leucyl-tRNA(Leu) + AMP + diphosphate. This chain is Leucine--tRNA ligase, found in Burkholderia ambifaria (strain MC40-6).